The primary structure comprises 155 residues: MPKGSGKVIAQNKKAFHDYFIEETYEAGLVLQGTEIKSIRAGRVNLKDAFARVHNGEVWVHNMHISTYEQGNRFNHDPLRTRKLLLHKKEIEKLAGASKETGYALVPVRIYLKNGFAKMALGLAKGKKQYDKRHDLKEKEAKREIARAFRDRQKM.

The protein belongs to the SmpB family.

It is found in the cytoplasm. Its function is as follows. Required for rescue of stalled ribosomes mediated by trans-translation. Binds to transfer-messenger RNA (tmRNA), required for stable association of tmRNA with ribosomes. tmRNA and SmpB together mimic tRNA shape, replacing the anticodon stem-loop with SmpB. tmRNA is encoded by the ssrA gene; the 2 termini fold to resemble tRNA(Ala) and it encodes a 'tag peptide', a short internal open reading frame. During trans-translation Ala-aminoacylated tmRNA acts like a tRNA, entering the A-site of stalled ribosomes, displacing the stalled mRNA. The ribosome then switches to translate the ORF on the tmRNA; the nascent peptide is terminated with the 'tag peptide' encoded by the tmRNA and targeted for degradation. The ribosome is freed to recommence translation, which seems to be the essential function of trans-translation. In Bacillus cereus (strain 03BB102), this protein is SsrA-binding protein.